The chain runs to 391 residues: UPF0229 protein BCG9842_B4751 (391 aa).

A compositionally biased stretch (polar residues) spans 1-16 (MGEENQPNYTISQENW). Disordered regions lie at residues 1-31 (MGEE…RHQE) and 80-117 (HVGQ…GDAA). A compositionally biased stretch (basic and acidic residues) spans 21–31 (KGYDDQQRHQE). The span at 98–115 (GSGGQKQKGPGKGQGAGD) shows a compositional bias: gly residues.

The protein belongs to the UPF0229 family.

In Bacillus cereus (strain G9842), this protein is UPF0229 protein BCG9842_B4751.